A 525-amino-acid polypeptide reads, in one-letter code: GMP synthase [glutamine-hydrolyzing] (525 aa).

In terms of domain architecture, Glutamine amidotransferase type-1 spans 9–207 (RILILDFGSQ…VLQICQCEPL (199 aa)). C86 functions as the Nucleophile in the catalytic mechanism. Active-site residues include H181 and E183. One can recognise a GMPS ATP-PPase domain in the interval 208 to 400 (WTPRNIIDQT…LGLPNAMLHR (193 aa)). 235–241 (SGGVDSA) lines the ATP pocket.

As to quaternary structure, homodimer.

The catalysed reaction is XMP + L-glutamine + ATP + H2O = GMP + L-glutamate + AMP + diphosphate + 2 H(+). It participates in purine metabolism; GMP biosynthesis; GMP from XMP (L-Gln route): step 1/1. Its function is as follows. Catalyzes the synthesis of GMP from XMP. This is GMP synthase [glutamine-hydrolyzing] from Hamiltonella defensa subsp. Acyrthosiphon pisum (strain 5AT).